Reading from the N-terminus, the 49-residue chain is Large ribosomal subunit protein bL33B (49 aa).

It belongs to the bacterial ribosomal protein bL33 family.

The polypeptide is Large ribosomal subunit protein bL33B (Shouchella clausii (strain KSM-K16) (Alkalihalobacillus clausii)).